The primary structure comprises 243 residues: Probable transcriptional regulatory protein BB_0025 (243 aa).

Belongs to the TACO1 family.

The protein resides in the cytoplasm. This chain is Probable transcriptional regulatory protein BB_0025, found in Borreliella burgdorferi (strain ATCC 35210 / DSM 4680 / CIP 102532 / B31) (Borrelia burgdorferi).